A 418-amino-acid polypeptide reads, in one-letter code: 3-isopropylmalate dehydratase large subunit 1 (418 aa).

The [4Fe-4S] cluster site is built by Cys298, Cys358, and Cys361.

Belongs to the aconitase/IPM isomerase family. LeuC type 2 subfamily. In terms of assembly, heterodimer of LeuC and LeuD. [4Fe-4S] cluster serves as cofactor.

The enzyme catalyses (2R,3S)-3-isopropylmalate = (2S)-2-isopropylmalate. Its pathway is amino-acid biosynthesis; L-leucine biosynthesis; L-leucine from 3-methyl-2-oxobutanoate: step 2/4. Its function is as follows. Catalyzes the isomerization between 2-isopropylmalate and 3-isopropylmalate, via the formation of 2-isopropylmaleate. The sequence is that of 3-isopropylmalate dehydratase large subunit 1 from Methanopyrus kandleri (strain AV19 / DSM 6324 / JCM 9639 / NBRC 100938).